A 189-amino-acid chain; its full sequence is Interferon alpha-H (189 aa).

The first 23 residues, 1–23, serve as a signal peptide directing secretion; the sequence is MAPAWSFLLALLLLSCNAICSLG. Intrachain disulfides connect Cys-24-Cys-122 and Cys-52-Cys-162.

The protein belongs to the alpha/beta interferon family.

Its subcellular location is the secreted. Its function is as follows. Produced by macrophages, IFN-alpha have antiviral activities. Interferon stimulates the production of two enzymes: a protein kinase and an oligoadenylate synthetase. This Bos taurus (Bovine) protein is Interferon alpha-H (IFNAH).